The sequence spans 241 residues: 1-(5-phosphoribosyl)-5-[(5-phosphoribosylamino)methylideneamino] imidazole-4-carboxamide isomerase (241 aa).

Residue D8 is the Proton acceptor of the active site. Catalysis depends on D129, which acts as the Proton donor.

This sequence belongs to the HisA/HisF family.

It is found in the cytoplasm. The catalysed reaction is 1-(5-phospho-beta-D-ribosyl)-5-[(5-phospho-beta-D-ribosylamino)methylideneamino]imidazole-4-carboxamide = 5-[(5-phospho-1-deoxy-D-ribulos-1-ylimino)methylamino]-1-(5-phospho-beta-D-ribosyl)imidazole-4-carboxamide. Its pathway is amino-acid biosynthesis; L-histidine biosynthesis; L-histidine from 5-phospho-alpha-D-ribose 1-diphosphate: step 4/9. The chain is 1-(5-phosphoribosyl)-5-[(5-phosphoribosylamino)methylideneamino] imidazole-4-carboxamide isomerase from Rhodospirillum rubrum (strain ATCC 11170 / ATH 1.1.1 / DSM 467 / LMG 4362 / NCIMB 8255 / S1).